A 168-amino-acid polypeptide reads, in one-letter code: Cyclic pyranopterin monophosphate synthase (168 aa).

Substrate is bound by residues 81–83 (LCH) and 117–118 (ME). Residue aspartate 132 is part of the active site.

The protein belongs to the MoaC family. As to quaternary structure, homohexamer; trimer of dimers.

It carries out the reaction (8S)-3',8-cyclo-7,8-dihydroguanosine 5'-triphosphate = cyclic pyranopterin phosphate + diphosphate. Its pathway is cofactor biosynthesis; molybdopterin biosynthesis. Functionally, catalyzes the conversion of (8S)-3',8-cyclo-7,8-dihydroguanosine 5'-triphosphate to cyclic pyranopterin monophosphate (cPMP). The sequence is that of Cyclic pyranopterin monophosphate synthase from Deinococcus radiodurans (strain ATCC 13939 / DSM 20539 / JCM 16871 / CCUG 27074 / LMG 4051 / NBRC 15346 / NCIMB 9279 / VKM B-1422 / R1).